The following is a 600-amino-acid chain: Adenine deaminase 2 (600 aa).

This sequence belongs to the metallo-dependent hydrolases superfamily. Adenine deaminase family. It depends on Mn(2+) as a cofactor.

The catalysed reaction is adenine + H2O + H(+) = hypoxanthine + NH4(+). This Bradyrhizobium sp. (strain ORS 278) protein is Adenine deaminase 2.